The following is a 327-amino-acid chain: Cell surface glycoprotein CD200 receptor 1 (327 aa).

The first 23 residues, 1–23, serve as a signal peptide directing secretion; the sequence is MLCFWRTSHVAVLLIWGVFAAES. At 24–239 the chain is on the extracellular side; sequence SCPDKNQTMQ…GRGGDQLLGS (216 aa). An Ig-like V-type domain is found at 26 to 145; the sequence is PDKNQTMQNN…GNFQNIYDLQ (120 aa). Residues N29, N34, N43, N96, N159, N187, N192, and N222 are each glycosylated (N-linked (GlcNAc...) asparagine). Intrachain disulfides connect C58–C129 and C81–C97. The 80-residue stretch at 147–226 folds into the Ig-like C2-type domain; it reads LVPPEVTHFP…HLTTGNQSLS (80 aa). Intrachain disulfides connect C164-C213 and C183-C201. The chain crosses the membrane as a helical span at residues 240–260; sequence YIQYIIPSIIILIIIGCICLL. Topologically, residues 261–327 are cytoplasmic; sequence KISGCRKCKL…DCLTLSAMGI (67 aa).

Belongs to the CD200R family. CD200 and CD200R1 interact via their respective N-terminal Ig-like domains. In terms of processing, phosphorylated on tyrosine residues. Post-translationally, highly N-glycosylated. As to expression, restricted to cells of the myeloid lineage.

It localises to the cell membrane. Functionally, inhibitory receptor for the CD200/OX2 cell surface glycoprotein. Limits inflammation by inhibiting the expression of pro-inflammatory molecules including TNF-alpha, interferons, and inducible nitric oxide synthase (iNOS) in response to selected stimuli. This chain is Cell surface glycoprotein CD200 receptor 1 (Cd200r1), found in Rattus norvegicus (Rat).